The primary structure comprises 216 residues: 3-keto-L-gulonate-6-phosphate decarboxylase UlaD (216 aa).

Asp-11 is a binding site for substrate. The Mg(2+) site is built by Glu-33 and Asp-62. Arg-192 serves as a coordination point for substrate.

The protein belongs to the HPS/KGPDC family. KGPDC subfamily. Homodimer. Requires Mg(2+) as cofactor.

The catalysed reaction is 3-dehydro-L-gulonate 6-phosphate + H(+) = L-xylulose 5-phosphate + CO2. The protein operates within cofactor degradation; L-ascorbate degradation; D-xylulose 5-phosphate from L-ascorbate: step 2/4. Catalyzes the decarboxylation of 3-keto-L-gulonate-6-P into L-xylulose-5-P. Is involved in the anaerobic L-ascorbate utilization. In Shigella dysenteriae serotype 1 (strain Sd197), this protein is 3-keto-L-gulonate-6-phosphate decarboxylase UlaD.